Consider the following 376-residue polypeptide: UPF0754 membrane protein SE_1527 (376 aa).

2 helical membrane passes run 4–24 (ILLV…TNMI) and 356–376 (TLGF…AIFV).

Belongs to the UPF0754 family.

The protein resides in the cell membrane. The sequence is that of UPF0754 membrane protein SE_1527 from Staphylococcus epidermidis (strain ATCC 12228 / FDA PCI 1200).